The following is a 709-amino-acid chain: Ribosomal RNA large subunit methyltransferase K/L (709 aa).

In terms of domain architecture, THUMP spans 43 to 154; it reads LAYRITLWTR…NGVITIAMNF (112 aa).

Belongs to the methyltransferase superfamily. RlmKL family.

It localises to the cytoplasm. The catalysed reaction is guanosine(2445) in 23S rRNA + S-adenosyl-L-methionine = N(2)-methylguanosine(2445) in 23S rRNA + S-adenosyl-L-homocysteine + H(+). It carries out the reaction guanosine(2069) in 23S rRNA + S-adenosyl-L-methionine = N(2)-methylguanosine(2069) in 23S rRNA + S-adenosyl-L-homocysteine + H(+). In terms of biological role, specifically methylates the guanine in position 2445 (m2G2445) and the guanine in position 2069 (m7G2069) of 23S rRNA. This Shewanella baltica (strain OS185) protein is Ribosomal RNA large subunit methyltransferase K/L.